The primary structure comprises 345 residues: MLPCFQLLRIGGGRGGDLYTFHPPAGAGCTYRLGHRADLCDVALRPQQEPGLISGIHAELHAEPRGDDWRVSLEDHSLQGTLVNNVRLPRGHRLELSDGDLLTFGPEGPPGTSPSEFYFMFQQVRVKPQDFAAITIPRSRGETRAGAGFRPMLPSQGAPQRPLSTLSPAPKATLILNSIGSLSKLRPQPLTFSPSWGGPRSLPVPAPPGEVGNAPSAPPPRNRRKSVHRVLAELDDDSQPSESPPPVLMEPRKKLRVDKAPLTPTGNRRGRPRKYPVSAPMAPPAVGGGEPCAAPCCCLPQEETVAWVQCDGCDVWFHVACVGCSIQAAREADFRCPGCRAGIQT.

An FHA domain is found at Y31–L88. 2 disordered regions span residues R138–S167 and L190–V277. The segment at A293–G342 adopts a PHD-type zinc-finger fold. The Zn(2+) site is built by C296, C298, C310, C313, H318, C321, C336, and C339.

It localises to the nucleus. Potential transcription factor that may play a role in the regulation of genes involved in cell cycle G1/S transition. May bind to regulatory elements of genes, including the promoter of the transcription factor FOXO1. The sequence is that of Transcription factor 19 (TCF19) from Macaca mulatta (Rhesus macaque).